A 630-amino-acid polypeptide reads, in one-letter code: Plastin-3 (630 aa).

EF-hand domains follow at residues 12-47 and 52-87; these read DELD…ANMP and KVRE…VKSS. Residues D25, N27, N29, E36, D65, N67, D69, K71, and E76 each contribute to the Ca(2+) site. Actin-binding stretches follow at residues 109–382 and 383–627; these read TSEL…ALTK and PENQ…GRGM. Calponin-homology (CH) domains are found at residues 123 to 239 and 267 to 378; these read EEEK…KIGL and LSPE…NKYP. Phosphoserine occurs at positions 268, 293, 326, and 339. The residue at position 391 (T391) is a Phosphothreonine. 2 Calponin-homology (CH) domains span residues 397–506 and 518–627; these read TREE…RRYT and KAND…GRGM.

As to quaternary structure, monomer.

It is found in the cytoplasm. In terms of biological role, actin-bundling protein. The chain is Plastin-3 (PLS3) from Bos taurus (Bovine).